We begin with the raw amino-acid sequence, 181 residues long: uncharacterized protein (181 aa).

To M.jannaschii MJ1106.

This is an uncharacterized protein from Methanothermobacter thermautotrophicus (strain ATCC 29096 / DSM 1053 / JCM 10044 / NBRC 100330 / Delta H) (Methanobacterium thermoautotrophicum).